We begin with the raw amino-acid sequence, 34 residues long: Subtilosin-A (34 aa).

The cyclopeptide (Asn-Gly) cross-link spans 1 to 34 (NKGCATCSIGIACLVDGPIPDFECAGATGLGLWG). The segment at residues 7-28 (CSIGIACLVDGPIPDFECAGAT) is a cross-link (2-cysteinyl-D-allo-threonine (Cys-Thr)). The 2-cysteinyl-L-phenylalanine (Cys-Phe) cross-link spans 13–22 (CLVDGPIPDF).

It belongs to the bacteriocin class V family. Post-translationally, alpha-amino of Asn-1 is covalently linked with the carboxyl of Gly-34 to form a cyclopeptide. Thioether cross-links are formed between cysteines and the alpha-carbons of other amino acids, Cys-7 to Thr-28 and Cys-13 to Phe-22. In forming this cross-link, Thr-28 is converted to D-amino acid.

The protein resides in the secreted. Its function is as follows. Has bactericidal activity against some Gram-positive bacteria. In Cytobacillus firmus (Bacillus firmus), this protein is Subtilosin-A.